A 220-amino-acid polypeptide reads, in one-letter code: Adenylate kinase (220 aa).

10-15 (GAGKGT) contacts ATP. The tract at residues 30–59 (STGDMLRAAVKAGTPLGVEAKGYMDAGKLV) is NMP. Residues Thr-31, Arg-36, 57 to 59 (KLV), 85 to 88 (GFPR), and Gln-92 contribute to the AMP site. An LID region spans residues 122 to 159 (GRRTHPASGRTYHVKFNPPKVEGHDDVTGEPLIQRDDD). Residues Arg-123 and 132 to 133 (TY) contribute to the ATP site. AMP is bound by residues Arg-156 and Arg-167. An ATP-binding site is contributed by Gly-206.

This sequence belongs to the adenylate kinase family. In terms of assembly, monomer.

The protein localises to the cytoplasm. It catalyses the reaction AMP + ATP = 2 ADP. It participates in purine metabolism; AMP biosynthesis via salvage pathway; AMP from ADP: step 1/1. Catalyzes the reversible transfer of the terminal phosphate group between ATP and AMP. Plays an important role in cellular energy homeostasis and in adenine nucleotide metabolism. This is Adenylate kinase from Burkholderia lata (strain ATCC 17760 / DSM 23089 / LMG 22485 / NCIMB 9086 / R18194 / 383).